The primary structure comprises 185 residues: Adenine phosphoribosyltransferase (185 aa).

Belongs to the purine/pyrimidine phosphoribosyltransferase family. As to quaternary structure, homodimer.

Its subcellular location is the cytoplasm. It catalyses the reaction AMP + diphosphate = 5-phospho-alpha-D-ribose 1-diphosphate + adenine. The protein operates within purine metabolism; AMP biosynthesis via salvage pathway; AMP from adenine: step 1/1. Functionally, catalyzes a salvage reaction resulting in the formation of AMP, that is energically less costly than de novo synthesis. The protein is Adenine phosphoribosyltransferase of Rubrobacter xylanophilus (strain DSM 9941 / JCM 11954 / NBRC 16129 / PRD-1).